Reading from the N-terminus, the 264-residue chain is Ribosomal RNA small subunit methyltransferase A (264 aa).

Positions 12, 14, 40, 61, 86, and 105 each coordinate S-adenosyl-L-methionine.

Belongs to the class I-like SAM-binding methyltransferase superfamily. rRNA adenine N(6)-methyltransferase family. RsmA subfamily.

Its subcellular location is the cytoplasm. It catalyses the reaction adenosine(1518)/adenosine(1519) in 16S rRNA + 4 S-adenosyl-L-methionine = N(6)-dimethyladenosine(1518)/N(6)-dimethyladenosine(1519) in 16S rRNA + 4 S-adenosyl-L-homocysteine + 4 H(+). Specifically dimethylates two adjacent adenosines (A1518 and A1519) in the loop of a conserved hairpin near the 3'-end of 16S rRNA in the 30S particle. May play a critical role in biogenesis of 30S subunits. The polypeptide is Ribosomal RNA small subunit methyltransferase A (Fusobacterium nucleatum subsp. nucleatum (strain ATCC 25586 / DSM 15643 / BCRC 10681 / CIP 101130 / JCM 8532 / KCTC 2640 / LMG 13131 / VPI 4355)).